A 1615-amino-acid polypeptide reads, in one-letter code: DNA-directed RNA polymerase I subunit rpa1 (1615 aa).

Cys65, Cys68, Cys75, and His78 together coordinate Zn(2+). Residues Gly155–Lys181 form a disordered region. Over residues Glu160 to Asp171 the composition is skewed to acidic residues. The span at Ser172 to Lys181 shows a compositional bias: basic and acidic residues. The Mg(2+) site is built by Asp593, Asp595, and Asp597. Residues Pro955 to Glu967 form a bridging helix region. The span at Asp1305–Ala1316 shows a compositional bias: acidic residues. A disordered region spans residues Asp1305–Asp1411. The span at Asn1317 to Asn1336 shows a compositional bias: low complexity. The segment covering Glu1366–Glu1399 has biased composition (acidic residues). Low complexity predominate over residues Ile1400–Asp1411.

This sequence belongs to the RNA polymerase beta' chain family. As to quaternary structure, component of the RNA polymerase I (Pol I) complex consisting of at least 13 subunits.

The protein resides in the nucleus. The catalysed reaction is RNA(n) + a ribonucleoside 5'-triphosphate = RNA(n+1) + diphosphate. Functionally, DNA-dependent RNA polymerase catalyzes the transcription of DNA into RNA using the four ribonucleoside triphosphates as substrates. Largest and catalytic core component of RNA polymerase I which synthesizes ribosomal RNA precursors. Forms the polymerase active center together with the second largest subunit. A single stranded DNA template strand of the promoter is positioned within the central active site cleft of Pol I. A bridging helix emanates from RPA1 and crosses the cleft near the catalytic site and is thought to promote translocation of Pol I by acting as a ratchet that moves the RNA-DNA hybrid through the active site by switching from straight to bent conformations at each step of nucleotide addition. In Dictyostelium discoideum (Social amoeba), this protein is DNA-directed RNA polymerase I subunit rpa1 (polr1a).